A 353-amino-acid polypeptide reads, in one-letter code: Ferredoxin--NADP reductase (353 aa).

FAD is bound by residues T25, E44, Q52, Y57, V97, F132, D298, and S339.

The protein belongs to the ferredoxin--NADP reductase type 2 family. Homodimer. FAD is required as a cofactor.

It carries out the reaction 2 reduced [2Fe-2S]-[ferredoxin] + NADP(+) + H(+) = 2 oxidized [2Fe-2S]-[ferredoxin] + NADPH. The chain is Ferredoxin--NADP reductase from Chlorobium phaeovibrioides (strain DSM 265 / 1930) (Prosthecochloris vibrioformis (strain DSM 265)).